We begin with the raw amino-acid sequence, 5112 residues long: Malformin synthetase mlfA (5112 aa).

Positions 225 to 616 (ERHAANRPHS…CGRADTQVKL (392 aa)) are adenylation 1. The Carrier 1 domain occupies 757 to 830 (SRLEQEIQLA…EAASLAEVQE (74 aa)). The residue at position 791 (serine 791) is an O-(pantetheine 4'-phosphoryl)serine. Residues 868–1299 (EDVFPCTTMQ…ALDSLTLLQA (432 aa)) form a condensation 1 region. The adenylation 2 stretch occupies residues 1327–1716 (DRRVTRQPDT…GRKDTQVKLR (390 aa)). The Carrier 2 domain occupies 1854–1931 (TAASELERTL…QLAAELGESP (78 aa)). Serine 1891 bears the O-(pantetheine 4'-phosphoryl)serine mark. Disordered regions lie at residues 1926–1961 (ELGE…DGVD) and 1994–2034 (GGSS…VPEP). 2 stretches are compositionally biased toward low complexity: residues 1930–1941 (SPRSSTSSASSS) and 1994–2012 (GGSS…SSSS). Positions 2064 to 2479 (EDIYPATALQ…AVSYSDKQTL (416 aa)) are condensation 2. Residues 2502-2894 (IRTPHAPAVC…IGRRDGQVKL (393 aa)) are adenylation 3. Residues 3030–3106 (RPTTAKECEM…QLLFHLRNAK (77 aa)) form the Carrier 3 domain. An O-(pantetheine 4'-phosphoryl)serine modification is found at serine 3067. Condensation regions lie at residues 3122 to 3586 (WVDL…TYEQ) and 3607 to 4044 (NIYP…EQLV). Residues 4069-4459 (HSSRQAVCAW…VGRKDNQIKF (391 aa)) are adenylation 4. Residues 4593 to 4669 (MPSTEAECIM…DLARHNSLVQ (77 aa)) form the Carrier 4 domain. Residue serine 4630 is modified to O-(pantetheine 4'-phosphoryl)serine. Residues 4724-5106 (IVVDIPGRIS…VEKVVALLRD (383 aa)) form a condensation 5 region.

It belongs to the NRP synthetase family.

It participates in secondary metabolite biosynthesis. Nonribosomal peptide synthetase; part of the gene cluster that mediates the biosynthesis of malformins, cyclic pentapeptides with a disulfide bond between 2 consecutive cysteins, that show potential anti-tumor as well as antimalarial and antitrypanosomal properties. The nonribosomal peptide synthetase mlfA is responsible of the formation of the cyclic pentapeptide. MlfA probably acts iteratively on one amino acid and possesses multiple amino acid specificities since it is involved in the biosynthesis of multiple malformins, including malformin C and malformin A2. Malformin C corresponds to a cyclo[D-Cys-D-Cys-Val-D-Leu-Val] pentapeptide whereas malformin A2 corresponds to a cyclo[D-Cys-D-Cys-Val-D-Leu-Ile] pentapeptide. The malformin biosynthesis clusters in malformin-producing fungi also contain enzymes involved in the formation of the disulfide bond between the two consecutive cysteins within malformins, in addition to additional tailoring enzymes such as methyltransferases or oxidoreductases. They are also composed of up to 4 major facilitator superfamily transporters, and transcription factors probably involved in the regulation of the expression of those clusters. This is Malformin synthetase mlfA from Aspergillus brasiliensis (strain CBS 101740 / IMI 381727 / IBT 21946).